The sequence spans 367 residues: Probable butyrate kinase (367 aa).

The protein belongs to the acetokinase family.

The protein resides in the cytoplasm. It carries out the reaction butanoate + ATP = butanoyl phosphate + ADP. This is Probable butyrate kinase from Bacillus cereus (strain G9842).